The sequence spans 369 residues: Beta-1,4-galactosyltransferase 2 (369 aa).

Topologically, residues 1–15 are cytoplasmic; sequence MSRLLGGTLERVCKA. Residues 16-36 traverse the membrane as a helical; Signal-anchor for type II membrane protein segment; that stretch reads VLLLCLLHFLVAVILYFDVYA. Residues 37 to 369 are Lumenal-facing; it reads QHLAFFSRFS…GQPMSWLTQG (333 aa). Polar residues predominate over residues 58 to 73; the sequence is ASSSTNCSRPNATAAS. The disordered stretch occupies residues 58–90; it reads ASSSTNCSRPNATAASSGLPEVPSARPGPTAPV. Asn-63 and Asn-68 each carry an N-linked (GlcNAc...) asparagine glycan. Cys-94 and Cys-136 are joined by a disulfide. UDP-alpha-D-galactose is bound by residues 147-151, 186-188, 214-215, and Trp-275; these read PFRHR, FNR, and VD. Cys-208 and Cys-227 are oxidised to a cystine. Position 215 (Asp-215) interacts with Mn(2+). 277-280 contacts N-acetyl-D-glucosamine; it reads GEDD. His-308 contacts Mn(2+). Residue 308–310 participates in UDP-alpha-D-galactose binding; that stretch reads HDR. Position 320 (Arg-320) interacts with N-acetyl-D-glucosamine. A glycan (N-linked (GlcNAc...) asparagine) is linked at Asn-354.

The protein belongs to the glycosyltransferase 7 family. Requires Mn(2+) as cofactor.

The protein localises to the golgi apparatus. The protein resides in the golgi stack membrane. The enzyme catalyses D-glucose + UDP-alpha-D-galactose = lactose + UDP + H(+). The catalysed reaction is an N-acetyl-beta-D-glucosaminyl derivative + UDP-alpha-D-galactose = a beta-D-galactosyl-(1-&gt;4)-N-acetyl-beta-D-glucosaminyl derivative + UDP + H(+). It catalyses the reaction N-acetyl-D-glucosamine + UDP-alpha-D-galactose = beta-D-galactosyl-(1-&gt;4)-N-acetyl-D-glucosamine + UDP + H(+). The protein operates within protein modification; protein glycosylation. Responsible for the synthesis of complex-type N-linked oligosaccharides in many glycoproteins as well as the carbohydrate moieties of glycolipids. Can produce lactose. This chain is Beta-1,4-galactosyltransferase 2, found in Mus musculus (Mouse).